A 434-amino-acid polypeptide reads, in one-letter code: ATP-dependent protease ATPase subunit HslU (434 aa).

ATP-binding positions include isoleucine 18, 60 to 65, aspartate 247, glutamate 312, and arginine 384; that span reads GVGKTE.

The protein belongs to the ClpX chaperone family. HslU subfamily. A double ring-shaped homohexamer of HslV is capped on each side by a ring-shaped HslU homohexamer. The assembly of the HslU/HslV complex is dependent on binding of ATP.

The protein resides in the cytoplasm. Functionally, ATPase subunit of a proteasome-like degradation complex; this subunit has chaperone activity. The binding of ATP and its subsequent hydrolysis by HslU are essential for unfolding of protein substrates subsequently hydrolyzed by HslV. HslU recognizes the N-terminal part of its protein substrates and unfolds these before they are guided to HslV for hydrolysis. The polypeptide is ATP-dependent protease ATPase subunit HslU (Brucella ovis (strain ATCC 25840 / 63/290 / NCTC 10512)).